Reading from the N-terminus, the 77-residue chain is Small integral membrane protein 7 (77 aa).

The first 17 residues, 1 to 17 (MIGDLLIFGTLLMNAGA), serve as a signal peptide directing secretion. Residues 18-55 (VLNFKLKKRETQSQGFGDDSGSSSTGENIREFLLSLRY) lie on the Extracellular side of the membrane. Residues 56 to 76 (FRIFIALWNIFMMFCMIVLFG) traverse the membrane as a helical segment. A topological domain (cytoplasmic) is located at residue Ser77.

It belongs to the SMIM7 family.

The protein resides in the membrane. This is Small integral membrane protein 7 (smim7) from Danio rerio (Zebrafish).